The sequence spans 344 residues: Intraflagellar transport protein 46 (344 aa).

A compositionally biased stretch (acidic residues) spans 1 to 16 (MDDSMDYPDRDGDDLD). The segment at 1 to 100 (MDDSMDYPDR…IANSDEAPPG (100 aa)) is disordered. Residues 18 to 30 (FQGTARSQVVQNQ) show a composition bias toward polar residues.

It belongs to the IFT46 family. In terms of assembly, component of the IFT complex B, the core composed of IFT25, IFT27, IFT46, IFT52, IFT74, IFT81 and IFT88 as well as associated subunits IFT20, IFT57, IFT80 and IFT172. Interacts with IFT25, IFT52, IFT70, IFT88 and DAW1.

The protein resides in the cytoplasm. It localises to the cytoskeleton. The protein localises to the cilium basal body. Its subcellular location is the cell projection. It is found in the cilium. Forms part of a complex involved in intraflagellar transport (IFT), the bi-directional movement of particles required for the assembly, maintenance and functioning of primary cilia. Plays a role in maintaining IFT complex B stability. The protein is Intraflagellar transport protein 46 of Chlamydomonas reinhardtii (Chlamydomonas smithii).